Reading from the N-terminus, the 635-residue chain is Phosphatidylserine decarboxylase proenzyme 2 (635 aa).

A C2 domain is found at 20 to 146 (KLQKFRIHRR…VVQEPESTCK (127 aa)). EF-hand domains lie at 174–209 (TERR…FGNL) and 210–245 (VAAN…QQEQ). Residues D187, N189, D191, Q193, E198, D223, N225, D227, and E234 each contribute to the Ca(2+) site. Catalysis depends on charge relay system; for autoendoproteolytic cleavage activity residues D443, H499, and S587. The active-site Schiff-base intermediate with substrate; via pyruvic acid; for decarboxylase activity is S587. S587 carries the pyruvic acid (Ser); by autocatalysis modification.

The protein belongs to the phosphatidylserine decarboxylase family. PSD-B subfamily. Eukaryotic type II sub-subfamily. As to quaternary structure, heterodimer of a large membrane-associated beta subunit and a small pyruvoyl-containing alpha subunit. Pyruvate is required as a cofactor. In terms of processing, is synthesized initially as an inactive proenzyme. Formation of the active enzyme involves a self-maturation process in which the active site pyruvoyl group is generated from an internal serine residue via an autocatalytic post-translational modification. Two non-identical subunits are generated from the proenzyme in this reaction, and the pyruvate is formed at the N-terminus of the alpha chain, which is derived from the carboxyl end of the proenzyme. The autoendoproteolytic cleavage occurs by a canonical serine protease mechanism, in which the side chain hydroxyl group of the serine supplies its oxygen atom to form the C-terminus of the beta chain, while the remainder of the serine residue undergoes an oxidative deamination to produce ammonia and the pyruvoyl prosthetic group on the alpha chain. During this reaction, the Ser that is part of the protease active site of the proenzyme becomes the pyruvoyl prosthetic group, which constitutes an essential element of the active site of the mature decarboxylase. As to expression, highly expressed in flowers and at lower levels in leaves.

The protein resides in the vacuole membrane. It catalyses the reaction a 1,2-diacyl-sn-glycero-3-phospho-L-serine + H(+) = a 1,2-diacyl-sn-glycero-3-phosphoethanolamine + CO2. It functions in the pathway phospholipid metabolism; phosphatidylethanolamine biosynthesis; phosphatidylethanolamine from CDP-diacylglycerol: step 2/2. In terms of biological role, catalyzes the formation of phosphatidylethanolamine (PtdEtn) from phosphatidylserine (PtdSer). Plays a central role in phospholipid metabolism and in the interorganelle trafficking of phosphatidylserine. Contributes only to a minor proportion of PtdEtn production. The chain is Phosphatidylserine decarboxylase proenzyme 2 (PSD2) from Arabidopsis thaliana (Mouse-ear cress).